A 304-amino-acid chain; its full sequence is Glutaminase (304 aa).

Positions 63, 114, 158, 165, 189, 240, and 258 each coordinate substrate.

The protein belongs to the glutaminase family. As to quaternary structure, homotetramer.

It catalyses the reaction L-glutamine + H2O = L-glutamate + NH4(+). In Shewanella loihica (strain ATCC BAA-1088 / PV-4), this protein is Glutaminase.